A 178-amino-acid chain; its full sequence is N-alpha-acetyltransferase 20 (178 aa).

Residues 2–157 (TTLRAFTCDD…DAYDMRKALS (156 aa)) form the N-acetyltransferase domain. The segment at 159–178 (DTEKKSIVPLPHPVRPEDIE) is disordered.

It belongs to the acetyltransferase family. ARD1 subfamily. Component of the N-terminal acetyltransferase B (NatB) complex which is composed of naa20 and naa25.

It is found in the cytoplasm. Its subcellular location is the nucleus. It carries out the reaction N-terminal L-methionyl-L-asparaginyl-[protein] + acetyl-CoA = N-terminal N(alpha)-acetyl-L-methionyl-L-asparaginyl-[protein] + CoA + H(+). The catalysed reaction is N-terminal L-methionyl-L-glutaminyl-[protein] + acetyl-CoA = N-terminal N(alpha)-acetyl-L-methionyl-L-glutaminyl-[protein] + CoA + H(+). It catalyses the reaction N-terminal L-methionyl-L-aspartyl-[protein] + acetyl-CoA = N-terminal N(alpha)-acetyl-L-methionyl-L-aspartyl-[protein] + CoA + H(+). The enzyme catalyses N-terminal L-methionyl-L-glutamyl-[protein] + acetyl-CoA = N-terminal N(alpha)-acetyl-L-methionyl-L-glutamyl-[protein] + CoA + H(+). Functionally, catalytic subunit of the NatB complex which catalyzes acetylation of the N-terminal methionine residues of peptides beginning with Met-Asp, Met-Glu, Met-Asn and Met-Gln. Proteins with cell cycle functions are overrepresented in the pool of NatB substrates. Required for maintaining the structure and function of actomyosin fibers and for proper cellular migration. In Xenopus laevis (African clawed frog), this protein is N-alpha-acetyltransferase 20 (naa20).